The chain runs to 332 residues: Anthranilate phosphoribosyltransferase (332 aa).

5-phospho-alpha-D-ribose 1-diphosphate-binding positions include glycine 79, 82–83 (GD), threonine 87, 89–92 (NIST), 107–115 (KHGNRSVSS), and serine 119. Anthranilate is bound at residue glycine 79. Mg(2+) is bound at residue serine 91. Asparagine 110 contributes to the anthranilate binding site. Arginine 165 contributes to the anthranilate binding site. 2 residues coordinate Mg(2+): aspartate 223 and glutamate 224.

It belongs to the anthranilate phosphoribosyltransferase family. In terms of assembly, homodimer. The cofactor is Mg(2+).

The enzyme catalyses N-(5-phospho-beta-D-ribosyl)anthranilate + diphosphate = 5-phospho-alpha-D-ribose 1-diphosphate + anthranilate. Its pathway is amino-acid biosynthesis; L-tryptophan biosynthesis; L-tryptophan from chorismate: step 2/5. Catalyzes the transfer of the phosphoribosyl group of 5-phosphorylribose-1-pyrophosphate (PRPP) to anthranilate to yield N-(5'-phosphoribosyl)-anthranilate (PRA). In Vibrio parahaemolyticus serotype O3:K6 (strain RIMD 2210633), this protein is Anthranilate phosphoribosyltransferase.